Consider the following 122-residue polypeptide: Large ribosomal subunit protein uL18 (122 aa).

The protein belongs to the universal ribosomal protein uL18 family. In terms of assembly, part of the 50S ribosomal subunit; part of the 5S rRNA/L5/L18/L25 subcomplex. Contacts the 5S and 23S rRNAs.

Functionally, this is one of the proteins that bind and probably mediate the attachment of the 5S RNA into the large ribosomal subunit, where it forms part of the central protuberance. The chain is Large ribosomal subunit protein uL18 from Acetivibrio thermocellus (strain ATCC 27405 / DSM 1237 / JCM 9322 / NBRC 103400 / NCIMB 10682 / NRRL B-4536 / VPI 7372) (Clostridium thermocellum).